A 292-amino-acid chain; its full sequence is Ribosomal protein L11 methyltransferase (292 aa).

Residues T144, G165, D187, and N229 each contribute to the S-adenosyl-L-methionine site.

It belongs to the methyltransferase superfamily. PrmA family.

It is found in the cytoplasm. It carries out the reaction L-lysyl-[protein] + 3 S-adenosyl-L-methionine = N(6),N(6),N(6)-trimethyl-L-lysyl-[protein] + 3 S-adenosyl-L-homocysteine + 3 H(+). Functionally, methylates ribosomal protein L11. This is Ribosomal protein L11 methyltransferase from Pseudomonas putida (strain ATCC 700007 / DSM 6899 / JCM 31910 / BCRC 17059 / LMG 24140 / F1).